A 113-amino-acid polypeptide reads, in one-letter code: Large ribosomal subunit protein eL30 (113 aa).

The protein belongs to the eukaryotic ribosomal protein eL30 family.

The protein is Large ribosomal subunit protein eL30 (RpL30) of Spodoptera frugiperda (Fall armyworm).